Reading from the N-terminus, the 288-residue chain is Pantothenate synthetase (288 aa).

Residue Met-35–His-42 coordinates ATP. His-42 acts as the Proton donor in catalysis. Gln-66 is a (R)-pantoate binding site. Position 66 (Gln-66) interacts with beta-alanine. ATP is bound at residue Gly-152–Asp-155. Residue Gln-158 participates in (R)-pantoate binding. ATP is bound by residues Gly-181 and Leu-189 to Arg-192.

Belongs to the pantothenate synthetase family. In terms of assembly, homodimer.

The protein localises to the cytoplasm. It catalyses the reaction (R)-pantoate + beta-alanine + ATP = (R)-pantothenate + AMP + diphosphate + H(+). The protein operates within cofactor biosynthesis; (R)-pantothenate biosynthesis; (R)-pantothenate from (R)-pantoate and beta-alanine: step 1/1. Catalyzes the condensation of pantoate with beta-alanine in an ATP-dependent reaction via a pantoyl-adenylate intermediate. In Maricaulis maris (strain MCS10) (Caulobacter maris), this protein is Pantothenate synthetase.